Reading from the N-terminus, the 399-residue chain is Beta sliding clamp (399 aa).

The protein belongs to the beta sliding clamp family. In terms of assembly, forms a ring-shaped head-to-tail homodimer around DNA which binds and tethers DNA polymerases and other proteins to the DNA. The DNA replisome complex has a single clamp-loading complex (3 tau and 1 each of delta, delta', psi and chi subunits) which binds 3 Pol III cores (1 core on the leading strand and 2 on the lagging strand) each with a beta sliding clamp dimer. Additional proteins in the replisome are other copies of gamma, psi and chi, Ssb, DNA helicase and RNA primase.

The protein localises to the cytoplasm. In terms of biological role, confers DNA tethering and processivity to DNA polymerases and other proteins. Acts as a clamp, forming a ring around DNA (a reaction catalyzed by the clamp-loading complex) which diffuses in an ATP-independent manner freely and bidirectionally along dsDNA. Initially characterized for its ability to contact the catalytic subunit of DNA polymerase III (Pol III), a complex, multichain enzyme responsible for most of the replicative synthesis in bacteria; Pol III exhibits 3'-5' exonuclease proofreading activity. The beta chain is required for initiation of replication as well as for processivity of DNA replication. The chain is Beta sliding clamp (dnaN) from Mycobacterium leprae (strain TN).